Reading from the N-terminus, the 638-residue chain is 1-deoxy-D-xylulose-5-phosphate synthase (638 aa).

Residues His-79 and 120-122 (AHS) each bind thiamine diphosphate. Asp-151 is a Mg(2+) binding site. Residues 152-153 (GA), Asn-180, Tyr-289, and Glu-371 contribute to the thiamine diphosphate site. Position 180 (Asn-180) interacts with Mg(2+).

The protein belongs to the transketolase family. DXPS subfamily. Homodimer. The cofactor is Mg(2+). It depends on thiamine diphosphate as a cofactor.

The enzyme catalyses D-glyceraldehyde 3-phosphate + pyruvate + H(+) = 1-deoxy-D-xylulose 5-phosphate + CO2. It functions in the pathway metabolic intermediate biosynthesis; 1-deoxy-D-xylulose 5-phosphate biosynthesis; 1-deoxy-D-xylulose 5-phosphate from D-glyceraldehyde 3-phosphate and pyruvate: step 1/1. In terms of biological role, catalyzes the acyloin condensation reaction between C atoms 2 and 3 of pyruvate and glyceraldehyde 3-phosphate to yield 1-deoxy-D-xylulose-5-phosphate (DXP). The polypeptide is 1-deoxy-D-xylulose-5-phosphate synthase (Rhizobium etli (strain CIAT 652)).